The chain runs to 170 residues: Cathelicidin antimicrobial peptide (170 aa).

The first 30 residues, 1 to 30 (MKTQRDGHSLGRWSLVLLLLGLVMPLAIIA), serve as a signal peptide directing secretion. A propeptide spans 31-131 (QVLSYKEAVL…DISCDKDNKR (101 aa)) (cathelin-like domain (CLD)). Intrachain disulfides connect C86/C97 and C108/C125. The active core stretch occupies residues 150-162 (FKRIVQRIKDFLR).

This sequence belongs to the cathelicidin family. Monomer, homodimer or homotrimer (in vitro). Oligomerizes as tetra- or hexamer in solution (in vitro). Post-translationally, the N-terminus is blocked. Proteolytically cleaved by proteinase PRTN3 into antibacterial peptide LL-37. Proteolytically cleaved by cathepsin CTSG and neutrophil elastase ELANE. In terms of processing, resistant to proteolytic degradation in solution, and when bound to both zwitterionic (mimicking mammalian membranes) and negatively charged membranes (mimicking bacterial membranes). Post-translationally, after secretion onto the skin surface, the CAMP gene product is processed by a serine protease-dependent mechanism into multiple novel antimicrobial peptides distinct from and shorter than cathelicidin LL-37, such as peptides KR-20 (residues 151-170), LL-23 (residues 134-156), LL-29 (residues 134-162), KS-30 (residues 141-170), RK-31 (residues 140-170) and FF-33 (residues 138-170). The peptides act synergistically, killing bacteria at lower concentrations when present together, and maintain activity at increased salt condition. As to expression, expressed in neutrophilic granulocytes (at protein level). Expressed in bone marrow. In terms of tissue distribution, expressed in granulocytes (at protein level). Expressed by the eccrine apparatus and secreted into sweat on skin (at protein level). Expressed in bone marrow and testis.

The protein localises to the secreted. Its subcellular location is the vesicle. Its function is as follows. Antimicrobial protein that is an integral component of the innate immune system. Binds to bacterial lipopolysaccharides (LPS). Acts via neutrophil N-formyl peptide receptors to enhance the release of CXCL2. Postsecretory processing generates multiple cathelicidin antimicrobial peptides with various lengths which act as a topical antimicrobial defense in sweat on skin. The unprocessed precursor form, cathelicidin antimicrobial peptide, inhibits the growth of Gram-negative E.coli and E.aerogenes with efficiencies comparable to that of the mature peptide LL-37 (in vitro). Antimicrobial peptide that is an integral component of the innate immune system. Binds to bacterial lipopolysaccharides (LPS). Causes membrane permeabilization by forming transmembrane pores (in vitro). Causes lysis of E.coli. Exhibits antimicrobial activity against Gram-negative bacteria such as P.aeruginosa, S.typhimurium, E.aerogenes, E.coli and P.syringae, Gram-positive bacteria such as L.monocytogenes, S.epidermidis, S.pyogenes and S.aureus, as well as vancomycin-resistant enterococci (in vitro). Exhibits antimicrobial activity against methicillin-resistant S.aureus, P.mirabilis, and C.albicans in low-salt media, but not in media containing 100 mM NaCl (in vitro). Forms chiral supramolecular assemblies with quinolone signal (PQS) molecules of P.aeruginosa, which may lead to interference of bacterial quorum signaling and perturbance of bacterial biofilm formation. May form supramolecular fiber-like assemblies on bacterial membranes. Induces cytokine and chemokine production as well as TNF/TNFA and CSF2/GMCSF production in normal human keratinocytes. Exhibits hemolytic activity against red blood cells. In terms of biological role, exhibits antimicrobial activity against E.coli and B.megaterium (in vitro). Functionally, acts synergistically with peptides KS-30 and KR-31, killing bacteria such as S.aureus, E.coli and C.albicans at lower concentrations when present together, and maintains activity at increased salt condition. Does not have the ability to stimulate CXCL8/IL8 release from keratinocytes. Its function is as follows. Poorly active (MIC &gt; 150 uM) against E.coli strain K12. Is able to induce the pro-inflammatory cytokine TNF/TNFA or the chemokine CCL2/MCP1. Moderately antibacterial. In terms of biological role, moderately antibacterial. Acts synergistically with peptides KR-20 and KR-31, killing bacteria such as S.aureus, E.coli and C.albicans at lower concentrations when present together, and maintain activity at increased salt condition. Does not have the ability to stimulate CXCL8/IL8 release from keratinocytes. Functionally, acts synergistically with peptides KS-30 and KR-31, killing bacteria such as S.aureus, E.coli and C.albicans at lower concentrations when present together, and maintain activity at increased salt condition. Does not have the ability to stimulate CXCL8/IL8 release from keratinocytes. Its function is as follows. Inhibits the growth of E.coli and B.megaterium and exhibits hemolytic activity against human red blood cells. In Homo sapiens (Human), this protein is Cathelicidin antimicrobial peptide.